Here is a 357-residue protein sequence, read N- to C-terminus: UPF0283 membrane protein BCAN_A1047 (357 aa).

Positions 1–36 are disordered; sequence MSDKTPRKPTAFRLEQPARVSAASEQEEPRRPRAVK. Over residues 27 to 36 the composition is skewed to basic and acidic residues; that stretch reads EEPRRPRAVK. Helical transmembrane passes span 78 to 98 and 109 to 129; these read ILFGALGILVSFAIGIWTEDL and LGWTALGVAMVALAAFAAIIL.

It belongs to the UPF0283 family.

It is found in the cell inner membrane. In Brucella canis (strain ATCC 23365 / NCTC 10854 / RM-666), this protein is UPF0283 membrane protein BCAN_A1047.